We begin with the raw amino-acid sequence, 282 residues long: Small ribosomal subunit protein uS2 (282 aa).

The disordered stretch occupies residues 260-282 (KRRRSKVYKEEEREVVTNEDESR). Residues 266–282 (VYKEEEREVVTNEDESR) are compositionally biased toward basic and acidic residues.

This sequence belongs to the universal ribosomal protein uS2 family.

This is Small ribosomal subunit protein uS2 from Wolbachia pipientis wMel.